A 277-amino-acid polypeptide reads, in one-letter code: Secoisolariciresinol dehydrogenase (277 aa).

NAD(+)-binding positions include 24–29, Asp48, Val73, and Asn99; that span reads GGASGI. Ser163 contributes to the substrate binding site. The Proton donor/acceptor role is filled by Tyr166. Lys170 is a binding site for NAD(+).

Belongs to the short-chain dehydrogenases/reductases (SDR) family. In terms of assembly, homotetramer.

It carries out the reaction (-)-secoisolariciresinol + 2 NAD(+) = (-)-matairesinol + 2 NADH + 2 H(+). Functionally, oxidoreductase involved in lignan biosynthesis. Catalyzes the stereospecific conversion of (-)-secoisolariciresinol to (-)-matairesinol via a lactol intermediate. The sequence is that of Secoisolariciresinol dehydrogenase from Forsythia intermedia (Border forsythia).